We begin with the raw amino-acid sequence, 442 residues long: 26S proteasome non-ATPase regulatory subunit 12 homolog B (442 aa).

Residues 1–129 (MEESRQLESS…KEEQGLIAEA (129 aa)) are a coiled coil. One can recognise a PCI domain in the interval 232 to 403 (EICRSYKAIY…GIICFQIVKD (172 aa)).

Belongs to the proteasome subunit p55 family. In terms of assembly, component of the 19S regulatory particle (RP/PA700) lid subcomplex of the 26S proteasome. The 26S proteasome is composed of a core protease (CP), known as the 20S proteasome, capped at one or both ends by the 19S regulatory particle (RP/PA700). The RP/PA700 complex is composed of at least 17 different subunits in two subcomplexes, the base and the lid, which form the portions proximal and distal to the 20S proteolytic core, respectively. In terms of tissue distribution, ubiquitous with highest expression in flowers.

Its subcellular location is the cytoplasm. It localises to the nucleus. In terms of biological role, acts as a regulatory subunit of the 26 proteasome which is involved in the ATP-dependent degradation of ubiquitinated proteins. Acts redundantly with RPN5A. In Arabidopsis thaliana (Mouse-ear cress), this protein is 26S proteasome non-ATPase regulatory subunit 12 homolog B (RPN5B).